The sequence spans 636 residues: Threonine--tRNA ligase (636 aa).

Residues 1-63 (MINITTSFPN…SKDGSVDPVT (63 aa)) form the TGS domain. Positions 244-535 (DHRKIAKDLG…LIEHYAGNIP (292 aa)) are catalytic. Residues C335, H386, and H512 each contribute to the Zn(2+) site.

The protein belongs to the class-II aminoacyl-tRNA synthetase family. As to quaternary structure, homodimer. The cofactor is Zn(2+).

It localises to the cytoplasm. The catalysed reaction is tRNA(Thr) + L-threonine + ATP = L-threonyl-tRNA(Thr) + AMP + diphosphate + H(+). Catalyzes the attachment of threonine to tRNA(Thr) in a two-step reaction: L-threonine is first activated by ATP to form Thr-AMP and then transferred to the acceptor end of tRNA(Thr). Also edits incorrectly charged L-seryl-tRNA(Thr). The protein is Threonine--tRNA ligase of Anaplasma marginale (strain St. Maries).